Consider the following 146-residue polypeptide: Large ribosomal subunit protein uL14 (146 aa).

It belongs to the universal ribosomal protein uL14 family.

The chain is Large ribosomal subunit protein uL14 (RPL23) from Encephalitozoon cuniculi (strain GB-M1) (Microsporidian parasite).